Here is a 238-residue protein sequence, read N- to C-terminus: uncharacterized protein (238 aa).

A run of 7 helical transmembrane segments spans residues 22–42 (VYGW…GLYA), 49–69 (LFSL…YIQA), 78–98 (AVMG…GTMV), 105–125 (FGGG…GLSA), 141–161 (ILML…VVSL), 166–186 (PLMY…LTVV), and 208–228 (LSLI…WYLL).

This sequence belongs to the BI1 family.

The protein resides in the cell membrane. This is an uncharacterized protein from Chlamydia muridarum (strain MoPn / Nigg).